We begin with the raw amino-acid sequence, 149 residues long: UPF0179 protein Mbar_A0292 (149 aa).

Belongs to the UPF0179 family.

This Methanosarcina barkeri (strain Fusaro / DSM 804) protein is UPF0179 protein Mbar_A0292.